A 521-amino-acid chain; its full sequence is Cytoplasmic polyadenylation element-binding protein 2 (521 aa).

Pro residues predominate over residues 1–11; that stretch reads MNLPQQQPPAA. Disordered regions lie at residues 1-35 and 50-88; these read MNLP…QAAA and PLLK…NMGI. Over residues 12 to 35 the composition is skewed to low complexity; sequence APQQPQSRRSPVSPQLQQQHQAAA. Ser21 bears the Phosphoserine mark. Polar residues predominate over residues 55-70; the sequence is SPWSNHQNSGWGTASM. 2 RRM domains span residues 264–355 and 372–454; these read RKVF…PWNL and KTIF…PYVL.

Belongs to the RRM CPEB family. As to quaternary structure, interacts with TENT2/GLD2. Expressed in embryo, cerebellum, salivary gland, thymus, heart, liver, lung, spleen, kidney, intestine, ovary and round spermatids. Weakly expressed in granular cells of dentate gyrus and the pyramidal cells of CA3 and CA1 of the hippocampus.

It is found in the cytoplasm. May play a role in translational regulation of stored mRNAs in transcriptionally inactive haploid spermatids. Binds to poly(U) RNA oligomers. Required for cell cycle progression, specifically for the transition from metaphase to anaphase. The protein is Cytoplasmic polyadenylation element-binding protein 2 (Cpeb2) of Mus musculus (Mouse).